Consider the following 45-residue polypeptide: MDFALLLAKLPEAYQIFDPLVDVLPLIPLFFLLLAFVWQAAVGFK.

A propeptide spanning residues 1 to 8 (MDFALLLA) is cleaved from the precursor. The helical transmembrane segment at 24–44 (LPLIPLFFLLLAFVWQAAVGF) threads the bilayer.

The protein belongs to the PsbK family. In terms of assembly, PSII is composed of 1 copy each of membrane proteins PsbA, PsbB, PsbC, PsbD, PsbE, PsbF, PsbH, PsbI, PsbJ, PsbK, PsbL, PsbM, PsbT, PsbX, PsbY, PsbZ, Psb30/Ycf12, peripheral proteins PsbO, CyanoQ (PsbQ), PsbU, PsbV and a large number of cofactors. It forms dimeric complexes.

The protein resides in the cellular thylakoid membrane. Its function is as follows. One of the components of the core complex of photosystem II (PSII). PSII is a light-driven water:plastoquinone oxidoreductase that uses light energy to abstract electrons from H(2)O, generating O(2) and a proton gradient subsequently used for ATP formation. It consists of a core antenna complex that captures photons, and an electron transfer chain that converts photonic excitation into a charge separation. This Gloeothece citriformis (strain PCC 7424) (Cyanothece sp. (strain PCC 7424)) protein is Photosystem II reaction center protein K.